The sequence spans 331 residues: GTP 3',8-cyclase (331 aa).

One can recognise a Radical SAM core domain in the interval Pro6–Pro231. Arg15 is a GTP binding site. Residues Cys22 and Cys26 each contribute to the [4Fe-4S] cluster site. S-adenosyl-L-methionine is bound at residue Tyr28. A [4Fe-4S] cluster-binding site is contributed by Cys29. Arg64 is a binding site for GTP. Gly68 provides a ligand contact to S-adenosyl-L-methionine. Residue Thr98 participates in GTP binding. Position 122 (Ser122) interacts with S-adenosyl-L-methionine. Lys158 lines the GTP pocket. S-adenosyl-L-methionine is bound at residue Met192. The [4Fe-4S] cluster site is built by Cys255 and Cys258. Arg260–Arg262 contacts GTP. Residue Cys272 coordinates [4Fe-4S] cluster.

Belongs to the radical SAM superfamily. MoaA family. As to quaternary structure, monomer and homodimer. The cofactor is [4Fe-4S] cluster.

The catalysed reaction is GTP + AH2 + S-adenosyl-L-methionine = (8S)-3',8-cyclo-7,8-dihydroguanosine 5'-triphosphate + 5'-deoxyadenosine + L-methionine + A + H(+). The protein operates within cofactor biosynthesis; molybdopterin biosynthesis. Catalyzes the cyclization of GTP to (8S)-3',8-cyclo-7,8-dihydroguanosine 5'-triphosphate. This chain is GTP 3',8-cyclase, found in Mesorhizobium japonicum (strain LMG 29417 / CECT 9101 / MAFF 303099) (Mesorhizobium loti (strain MAFF 303099)).